A 116-amino-acid chain; its full sequence is uncharacterized protein (116 aa).

This is an uncharacterized protein from Schizosaccharomyces pombe (strain 972 / ATCC 24843) (Fission yeast).